Reading from the N-terminus, the 129-residue chain is Glycine cleavage system H protein (129 aa).

The 83-residue stretch at 24–106 folds into the Lipoyl-binding domain; sequence LFKIGVSEFA…IGDGWLLIIK (83 aa). Position 65 is an N6-lipoyllysine (Lys65).

Belongs to the GcvH family. As to quaternary structure, the glycine cleavage system is composed of four proteins: P, T, L and H. (R)-lipoate serves as cofactor.

The glycine cleavage system catalyzes the degradation of glycine. The H protein shuttles the methylamine group of glycine from the P protein to the T protein. This Prochlorococcus marinus subsp. pastoris (strain CCMP1986 / NIES-2087 / MED4) protein is Glycine cleavage system H protein.